The primary structure comprises 544 residues: Protein nucleotidyltransferase YdiU (544 aa).

Residues Gly133, Gly135, Arg136, Lys155, Asp167, Gly168, Arg218, and Arg225 each coordinate ATP. The active-site Proton acceptor is Asp294. Mg(2+)-binding residues include Asn295 and Asp304. Asp304 provides a ligand contact to ATP.

It belongs to the SELO family. Mg(2+) serves as cofactor. It depends on Mn(2+) as a cofactor.

The enzyme catalyses L-seryl-[protein] + ATP = 3-O-(5'-adenylyl)-L-seryl-[protein] + diphosphate. It carries out the reaction L-threonyl-[protein] + ATP = 3-O-(5'-adenylyl)-L-threonyl-[protein] + diphosphate. The catalysed reaction is L-tyrosyl-[protein] + ATP = O-(5'-adenylyl)-L-tyrosyl-[protein] + diphosphate. It catalyses the reaction L-histidyl-[protein] + UTP = N(tele)-(5'-uridylyl)-L-histidyl-[protein] + diphosphate. The enzyme catalyses L-seryl-[protein] + UTP = O-(5'-uridylyl)-L-seryl-[protein] + diphosphate. It carries out the reaction L-tyrosyl-[protein] + UTP = O-(5'-uridylyl)-L-tyrosyl-[protein] + diphosphate. In terms of biological role, nucleotidyltransferase involved in the post-translational modification of proteins. It can catalyze the addition of adenosine monophosphate (AMP) or uridine monophosphate (UMP) to a protein, resulting in modifications known as AMPylation and UMPylation. This Cupriavidus metallidurans (strain ATCC 43123 / DSM 2839 / NBRC 102507 / CH34) (Ralstonia metallidurans) protein is Protein nucleotidyltransferase YdiU.